Reading from the N-terminus, the 150-residue chain is Large ribosomal subunit protein bL9 (150 aa).

The protein belongs to the bacterial ribosomal protein bL9 family.

Its function is as follows. Binds to the 23S rRNA. The polypeptide is Large ribosomal subunit protein bL9 (Polynucleobacter necessarius subsp. necessarius (strain STIR1)).